The following is a 316-amino-acid chain: Initiation factor TFIIB homolog (316 aa).

It belongs to the asfivirus C315R family.

Its function is as follows. Putative initation factor. The protein is Initiation factor TFIIB homolog of Ornithodoros (relapsing fever ticks).